Reading from the N-terminus, the 246-residue chain is tRNA pseudouridine synthase A (246 aa).

Asp53 (nucleophile) is an active-site residue. Tyr112 is a binding site for substrate.

This sequence belongs to the tRNA pseudouridine synthase TruA family. Homodimer.

It catalyses the reaction uridine(38/39/40) in tRNA = pseudouridine(38/39/40) in tRNA. In terms of biological role, formation of pseudouridine at positions 38, 39 and 40 in the anticodon stem and loop of transfer RNAs. This chain is tRNA pseudouridine synthase A, found in Anaplasma phagocytophilum (strain HZ).